A 472-amino-acid chain; its full sequence is GTPase Der (472 aa).

EngA-type G domains are found at residues 3-166 and 176-349; these read PVIA…PEQE and IRIG…DSAM. GTP contacts are provided by residues 9–16, 56–60, 118–121, 182–189, 229–233, and 294–297; these read GRPNVGKS, DTGGI, NKID, DTAGV, and NKWD. One can recognise a KH-like domain in the interval 350–434; sequence AKWSTNQLTT…PIRFEFRSGE (85 aa). The tract at residues 433–472 is disordered; the sequence is GENPFAGKKNKLSPRQQKKKERLMKHVKKLKHKQKRKKSR. Positions 440 to 472 are enriched in basic residues; the sequence is KKNKLSPRQQKKKERLMKHVKKLKHKQKRKKSR.

It belongs to the TRAFAC class TrmE-Era-EngA-EngB-Septin-like GTPase superfamily. EngA (Der) GTPase family. In terms of assembly, associates with the 50S ribosomal subunit.

In terms of biological role, GTPase that plays an essential role in the late steps of ribosome biogenesis. This chain is GTPase Der, found in Hahella chejuensis (strain KCTC 2396).